A 322-amino-acid polypeptide reads, in one-letter code: Lactamase-like protein nscB (322 aa).

Zn(2+) is bound by residues H97, H99, D101, and H102. The active-site Proton donor/acceptor is the D101.

The protein belongs to the metallo-beta-lactamase superfamily. The cofactor is Zn(2+).

Its pathway is secondary metabolite biosynthesis. Functionally, lactamase-like protein; part of the gene cluster that mediates the biosynthesis of neosartoricin B, a prenylated anthracenone that probably exhibits T-cell antiproliferative activity, suggestive of a physiological role as an immunosuppressive agent. The non-reducing polyketide synthase nscA probably synthesizes and cyclizes the decaketide backbone. The hydrolase nscB then mediates the product release through hydrolysis followed by spontaneous decarboxylation. The prenyltransferase nscD catalyzes the addition of the dimethylallyl group to the aromatic C5. The FAD-dependent monooxygenase nscC is then responsible for the stereospecific hydroxylation at C2. Neosartoricin B can be converted into two additional compounds neosartoricins C and D. Neosartoricin C is a spirocyclic compound that is cyclized through the attack of C3 hydroxyl on C14, followed by dehydration. On the other hand, neosartoricin D is a further cyclized compound in which attack of C2 on C14 in neosartoricin C results in the formation of the acetal-containing dioxabicyclo-octanone ring. Both of these compounds are novel and possibly represent related metabolites of the gene cluster. In Trichophyton rubrum (strain ATCC MYA-4607 / CBS 118892) (Athlete's foot fungus), this protein is Lactamase-like protein nscB.